Here is a 383-residue protein sequence, read N- to C-terminus: Probable aspartate/prephenate aminotransferase (383 aa).

L-aspartate-binding residues include G39, W125, and N175. N6-(pyridoxal phosphate)lysine is present on K234. An L-aspartate-binding site is contributed by R361.

The protein belongs to the class-I pyridoxal-phosphate-dependent aminotransferase family. As to quaternary structure, homodimer. Pyridoxal 5'-phosphate is required as a cofactor.

It localises to the cytoplasm. The enzyme catalyses L-aspartate + 2-oxoglutarate = oxaloacetate + L-glutamate. It carries out the reaction L-arogenate + oxaloacetate = prephenate + L-aspartate. Functionally, catalyzes the reversible conversion of aspartate and 2-oxoglutarate to glutamate and oxaloacetate. Can also transaminate prephenate in the presence of aspartate. This chain is Probable aspartate/prephenate aminotransferase (aspC), found in Thermus aquaticus.